A 54-amino-acid polypeptide reads, in one-letter code: Photosystem II reaction center protein K (54 aa).

The propeptide occupies 1 to 17 (MLLEHVTITLLNNTSFA). A helical membrane pass occupies residues 29-49 (LIDVLPIIPLLFLLLAFVWQA).

It belongs to the PsbK family. As to quaternary structure, PSII is composed of 1 copy each of membrane proteins PsbA, PsbB, PsbC, PsbD, PsbE, PsbF, PsbH, PsbI, PsbJ, PsbK, PsbL, PsbM, PsbT, PsbY, PsbZ, Psb30/Ycf12, at least 3 peripheral proteins of the oxygen-evolving complex and a large number of cofactors. It forms dimeric complexes.

It localises to the plastid. Its subcellular location is the chloroplast thylakoid membrane. One of the components of the core complex of photosystem II (PSII). PSII is a light-driven water:plastoquinone oxidoreductase that uses light energy to abstract electrons from H(2)O, generating O(2) and a proton gradient subsequently used for ATP formation. It consists of a core antenna complex that captures photons, and an electron transfer chain that converts photonic excitation into a charge separation. This chain is Photosystem II reaction center protein K, found in Euglena mutabilis.